A 213-amino-acid chain; its full sequence is Leucine-rich repeat protein 1 (213 aa).

An N-terminal signal peptide occupies residues 1-21 (MGAGALGVVAMVAAAVVVAMA). 4 LRR repeats span residues 90 to 113 (DHLQ…LGNL), 115 to 137 (NLIS…LGKL), 138 to 161 (TSLV…LAGI), and 163 to 186 (SLKV…PFEH).

Interacts with HIR1.

The protein resides in the early endosome membrane. It is found in the late endosome membrane. Its subcellular location is the cell membrane. In terms of biological role, involved in plant defense response. This chain is Leucine-rich repeat protein 1, found in Oryza sativa subsp. indica (Rice).